The chain runs to 292 residues: Large ribosomal subunit protein mL67 (292 aa).

Residues 59–83 (VELKSPSRLQLKSEPGNKGNPKGHG) are disordered.

Belongs to the mitochondrion-specific ribosomal protein mL67 family. As to quaternary structure, component of the mitochondrial large ribosomal subunit (mt-LSU). Mature N.crassa 74S mitochondrial ribosomes consist of a small (37S) and a large (54S) subunit. The 37S small subunit contains a 16S ribosomal RNA (16S mt-rRNA) and 32 different proteins. The 54S large subunit contains a 23S rRNA (23S mt-rRNA) and 42 different proteins.

Its subcellular location is the mitochondrion. Component of the mitochondrial ribosome (mitoribosome), a dedicated translation machinery responsible for the synthesis of mitochondrial genome-encoded proteins, including at least some of the essential transmembrane subunits of the mitochondrial respiratory chain. The mitoribosomes are attached to the mitochondrial inner membrane and translation products are cotranslationally integrated into the membrane. mL67/MHR1 also has extraribosomal functions, being involved in regulation of mitochondrial DNA recombination, maintenance and repair, and generation of homoplasmic cells. mL67/MHR1 also acts as a transcription factor involved in regulation of RNA polymerase II-dependent transcription. This is Large ribosomal subunit protein mL67 (mhr1) from Neurospora crassa (strain ATCC 24698 / 74-OR23-1A / CBS 708.71 / DSM 1257 / FGSC 987).